The sequence spans 414 residues: Glucose-1-phosphate adenylyltransferase (414 aa).

Residues Y103, G168, 183 to 184, and S201 each bind alpha-D-glucose 1-phosphate; that span reads EK.

This sequence belongs to the bacterial/plant glucose-1-phosphate adenylyltransferase family. Homotetramer.

It catalyses the reaction alpha-D-glucose 1-phosphate + ATP + H(+) = ADP-alpha-D-glucose + diphosphate. It functions in the pathway glycan biosynthesis; glycogen biosynthesis. Functionally, involved in the biosynthesis of ADP-glucose, a building block required for the elongation reactions to produce glycogen. Catalyzes the reaction between ATP and alpha-D-glucose 1-phosphate (G1P) to produce pyrophosphate and ADP-Glc. This Thermus caldophilus protein is Glucose-1-phosphate adenylyltransferase.